Here is a 414-residue protein sequence, read N- to C-terminus: Tryptophan synthase beta chain (414 aa).

The span at 1–12 (MVSTISRHDQNK) shows a compositional bias: basic and acidic residues. A disordered region spans residues 1–23 (MVSTISRHDQNKNNDYLNQPSKE). The residue at position 109 (Lys-109) is an N6-(pyridoxal phosphate)lysine.

It belongs to the TrpB family. In terms of assembly, tetramer of two alpha and two beta chains. Requires pyridoxal 5'-phosphate as cofactor.

The catalysed reaction is (1S,2R)-1-C-(indol-3-yl)glycerol 3-phosphate + L-serine = D-glyceraldehyde 3-phosphate + L-tryptophan + H2O. It functions in the pathway amino-acid biosynthesis; L-tryptophan biosynthesis; L-tryptophan from chorismate: step 5/5. Functionally, the beta subunit is responsible for the synthesis of L-tryptophan from indole and L-serine. The polypeptide is Tryptophan synthase beta chain (Prochlorococcus marinus (strain MIT 9515)).